We begin with the raw amino-acid sequence, 259 residues long: Aspartate/glutamate leucyltransferase (259 aa).

Belongs to the R-transferase family. Bpt subfamily.

It localises to the cytoplasm. It carries out the reaction N-terminal L-glutamyl-[protein] + L-leucyl-tRNA(Leu) = N-terminal L-leucyl-L-glutamyl-[protein] + tRNA(Leu) + H(+). The enzyme catalyses N-terminal L-aspartyl-[protein] + L-leucyl-tRNA(Leu) = N-terminal L-leucyl-L-aspartyl-[protein] + tRNA(Leu) + H(+). Its function is as follows. Functions in the N-end rule pathway of protein degradation where it conjugates Leu from its aminoacyl-tRNA to the N-termini of proteins containing an N-terminal aspartate or glutamate. In Sinorhizobium medicae (strain WSM419) (Ensifer medicae), this protein is Aspartate/glutamate leucyltransferase.